A 256-amino-acid chain; its full sequence is Uridylate kinase (256 aa).

ATP is bound at residue 10–13 (KLSG). Glycine 52 contacts UMP. 2 residues coordinate ATP: glycine 53 and arginine 57. Residues aspartate 72 and 134–141 (NGQPFLTT) contribute to the UMP site. ATP contacts are provided by tyrosine 168 and aspartate 171.

It belongs to the UMP kinase family. In terms of assembly, homohexamer.

The protein resides in the cytoplasm. It catalyses the reaction UMP + ATP = UDP + ADP. The protein operates within pyrimidine metabolism; CTP biosynthesis via de novo pathway; UDP from UMP (UMPK route): step 1/1. With respect to regulation, inhibited by UTP. In terms of biological role, catalyzes the reversible phosphorylation of UMP to UDP. The sequence is that of Uridylate kinase from Frankia alni (strain DSM 45986 / CECT 9034 / ACN14a).